We begin with the raw amino-acid sequence, 427 residues long: Transcription termination factor Rho (427 aa).

The 75-residue stretch at 51 to 125 (LLFMEGVLEI…LHVEAVNGDD (75 aa)) folds into the Rho RNA-BD domain. ATP contacts are provided by residues 168–173 (GFGQRG), 180–185 (KAGKTM), and Arg-211.

This sequence belongs to the Rho family. In terms of assembly, homohexamer. The homohexamer assembles into an open ring structure.

Facilitates transcription termination by a mechanism that involves Rho binding to the nascent RNA, activation of Rho's RNA-dependent ATPase activity, and release of the mRNA from the DNA template. The sequence is that of Transcription termination factor Rho from Bacillus subtilis (strain 168).